The sequence spans 623 residues: Chaperone protein HtpG (623 aa).

The tract at residues 1–336 (MSMKGQETRG…SNDLPLNVSR (336 aa)) is a; substrate-binding. A b region spans residues 337 to 551 (EILQDSRVTQ…ADEMSTQMAK (215 aa)). Positions 552 to 623 (LFAAAGQEAP…IRRMNKLLSA (72 aa)) are c.

It belongs to the heat shock protein 90 family. As to quaternary structure, homodimer.

It localises to the cytoplasm. In terms of biological role, molecular chaperone. Has ATPase activity. This is Chaperone protein HtpG from Serratia proteamaculans (strain 568).